A 65-amino-acid chain; its full sequence is Toxin Cbi1 (65 aa).

Residues 1 to 64 (KDGYPMDNKG…VWDRATNKCR (64 aa)) form the LCN-type CS-alpha/beta domain. 4 disulfide bridges follow: Cys11–Cys63, Cys15–Cys37, Cys22–Cys44, and Cys26–Cys46.

Belongs to the long (4 C-C) scorpion toxin superfamily. Sodium channel inhibitor family. Beta subfamily. In terms of tissue distribution, expressed by the venom gland.

Its subcellular location is the secreted. Its function is as follows. Beta toxins bind voltage-independently at site-4 of sodium channels (Nav) and shift the voltage of activation toward more negative potentials thereby affecting sodium channel activation and promoting spontaneous and repetitive firing. This Centruroides bicolor (Scorpion) protein is Toxin Cbi1.